Here is a 334-residue protein sequence, read N- to C-terminus: Glycerol-3-phosphate dehydrogenase [NAD(P)+] (334 aa).

Ser10, Trp11, His31, Arg32, and Lys105 together coordinate NADPH. 3 residues coordinate sn-glycerol 3-phosphate: Lys105, Gly136, and Ser138. Ala140 serves as a coordination point for NADPH. Sn-glycerol 3-phosphate-binding residues include Lys191, Asp244, Ser254, Arg255, and Asn256. Lys191 (proton acceptor) is an active-site residue. NADPH is bound at residue Arg255. Val279 and Glu281 together coordinate NADPH.

It belongs to the NAD-dependent glycerol-3-phosphate dehydrogenase family.

The protein localises to the cytoplasm. The enzyme catalyses sn-glycerol 3-phosphate + NAD(+) = dihydroxyacetone phosphate + NADH + H(+). The catalysed reaction is sn-glycerol 3-phosphate + NADP(+) = dihydroxyacetone phosphate + NADPH + H(+). Its pathway is membrane lipid metabolism; glycerophospholipid metabolism. Functionally, catalyzes the reduction of the glycolytic intermediate dihydroxyacetone phosphate (DHAP) to sn-glycerol 3-phosphate (G3P), the key precursor for phospholipid synthesis. This is Glycerol-3-phosphate dehydrogenase [NAD(P)+] from Chlorobium phaeobacteroides (strain BS1).